We begin with the raw amino-acid sequence, 157 residues long: Small ribosomal subunit protein uS7 (157 aa).

This sequence belongs to the universal ribosomal protein uS7 family. Part of the 30S ribosomal subunit. Contacts proteins S9 and S11.

One of the primary rRNA binding proteins, it binds directly to 16S rRNA where it nucleates assembly of the head domain of the 30S subunit. Is located at the subunit interface close to the decoding center, probably blocks exit of the E-site tRNA. This chain is Small ribosomal subunit protein uS7, found in Protochlamydia amoebophila (strain UWE25).